The following is a 59-amino-acid chain: Venom protein 27.7 (59 aa).

The first 29 residues, 1–29, serve as a signal peptide directing secretion; the sequence is MTFITLTIGLSLRTIFLIFIFLPPPHLLA.

This sequence belongs to the non-disulfide-bridged peptide (NDBP) superfamily. As to expression, expressed by the venom gland.

The protein resides in the secreted. The chain is Venom protein 27.7 from Lychas mucronatus (Chinese swimming scorpion).